Here is a 100-residue protein sequence, read N- to C-terminus: Large ribosomal subunit protein uL23 (100 aa).

Belongs to the universal ribosomal protein uL23 family. As to quaternary structure, part of the 50S ribosomal subunit. Contacts protein L29, and trigger factor when it is bound to the ribosome.

One of the early assembly proteins it binds 23S rRNA. One of the proteins that surrounds the polypeptide exit tunnel on the outside of the ribosome. Forms the main docking site for trigger factor binding to the ribosome. In Synechococcus sp. (strain CC9311), this protein is Large ribosomal subunit protein uL23.